Consider the following 553-residue polypeptide: Cysteine desulfurase IscS (553 aa).

The span at 102–122 (NNISSNNTQYNNNSSNSGSLN) shows a compositional bias: low complexity. Positions 102–125 (NNISSNNTQYNNNSSNSGSLNDEG) are disordered.

Belongs to the class-V pyridoxal-phosphate-dependent aminotransferase family. NifS/IscS subfamily. As to quaternary structure, homotetramer. Interacts with Isd11; the interaction enhances cysteine desulfurase activity of IscS. Interacts with IscU. Component of a complex, at least composed of IscS, Isd11 and IscU. It depends on pyridoxal 5'-phosphate as a cofactor.

It localises to the mitochondrion. The catalysed reaction is (sulfur carrier)-H + L-cysteine = (sulfur carrier)-SH + L-alanine. The protein operates within cofactor biosynthesis; iron-sulfur cluster biosynthesis. In terms of biological role, catalyzes sulfur activation and mobilization in iron-sulfur cluster formation (ISC) pathway for iron-sulfur (Fe-S) cluster biogenesis. Active when in complex with a partner protein Isd11. This is Cysteine desulfurase IscS from Plasmodium falciparum (isolate 3D7).